Here is a 361-residue protein sequence, read N- to C-terminus: Phenylalanine--tRNA ligase alpha subunit (361 aa).

Glu-260 serves as a coordination point for Mg(2+).

It belongs to the class-II aminoacyl-tRNA synthetase family. Phe-tRNA synthetase alpha subunit type 1 subfamily. Tetramer of two alpha and two beta subunits. It depends on Mg(2+) as a cofactor.

Its subcellular location is the cytoplasm. It catalyses the reaction tRNA(Phe) + L-phenylalanine + ATP = L-phenylalanyl-tRNA(Phe) + AMP + diphosphate + H(+). The chain is Phenylalanine--tRNA ligase alpha subunit from Chelativorans sp. (strain BNC1).